A 914-amino-acid polypeptide reads, in one-letter code: MDGHSNFTQPSDTSHASHTIPSSSSSQRRRLTKKPPPSTSARHHHSSLSIDSRVDAQSLVGKRSSTSLRRAPSAPPARTPTSTHASNSSSPRNPSSSTRLNNHSPIIPAASEFAASSLSPSARDRDSDPARNDHGHQLQNNNNYYYSAFTNAHHHNQYSAASHRRSNSYGHPHGPQSSNSLTFNHSEDFIGAPFDGSAILNRIEATKASPTLGSGAFPHISNPIPVGAAAPAQYSRGSPALEQSFTFPSAAMSEKSQQVRGMEAQLPTSKRYSDETKEPKPGVLRKKSGFSGFMSGLVGTPKKPLISAPENPVHVTHVGYDSATGQFTGLPKEWQRLISESGITEKERRENPETLVNVIKFYKETTEKPAEDQVLEKFHDARPGLPSAPSAGSMISPGLAPHHYNPMSPMISPPASPRFPQVGHEGNFENPRSPPPVPKNKDVTLMPSRPAPRPPVSLPTRTAPHAPYAAKDSGIDMPPQHDDLTPTTYQPPKESQPILPEEHRSRSNSRVNGNTAYPASQQSPAVQAAYQQQLMQQQQEQALAQAQASMSGSMSRAPSKRQPQAQQPTPPQSQHQYSRPTDANGAQQTQRPQQPQIGPVPQSRPRHRSRQSNGLDVVAALKRICSEGDPREIYRSFTKIGQGASGGVYTGHERGSNRLVAIKQMNLEQQPKKDLIINEILVMKDSSHPNIVNFIDSYLCGGELWVVMEFMEGGSLTDVVTFNIMTEGQIASVCRETLLGLQHLHSKGVIHRDIKSDNILLSMEGNIKLTDFGFCATINEAQNKRTTMVGTPYWMAPEVVTRKEYGRKVDIWSLGIMAIEMIEGEPPYLTESPLRALWLIATNGTPQIKDEGNMSPVFRDFLYFALKVDPDKRASAHDLLRHEFMNLCVDLSHLSPLVRAAREARAQEKARKGQ.

The segment covering 1–12 (MDGHSNFTQPSD) has biased composition (polar residues). 3 disordered regions span residues 1–140 (MDGH…QLQN), 156–184 (NQYS…LTFN), and 251–286 (AMSE…VLRK). Composition is skewed to low complexity over residues 13–26 (TSHA…SSSS), 63–72 (RSSTSLRRAP), and 79–97 (TPTS…PSSS). The segment covering 122–136 (ARDRDSDPARNDHGH) has biased composition (basic and acidic residues). Residues 156–166 (NQYSAASHRRS) are compositionally biased toward basic residues. A compositionally biased stretch (polar residues) spans 175–184 (PQSSNSLTFN). Residues 271 to 280 (RYSDETKEPK) show a composition bias toward basic and acidic residues. Residues 306-319 (ISAPENPVHVTHVG) enclose the CRIB domain. The tract at residues 408–615 (SPMISPPASP…RHRSRQSNGL (208 aa)) is disordered. Composition is skewed to low complexity over residues 516–548 (AYPA…QAQA) and 562–576 (QPQA…SQHQ). Positions 577–586 (YSRPTDANGA) are enriched in polar residues. The span at 587 to 596 (QQTQRPQQPQ) shows a compositional bias: low complexity. The region spanning 634-885 (YRSFTKIGQG…AHDLLRHEFM (252 aa)) is the Protein kinase domain. ATP contacts are provided by residues 640-648 (IGQGASGGV) and lysine 663. The active-site Proton acceptor is aspartate 753.

It belongs to the protein kinase superfamily. STE Ser/Thr protein kinase family. STE20 subfamily.

The protein localises to the cytoplasm. It is found in the nucleus. It carries out the reaction L-seryl-[protein] + ATP = O-phospho-L-seryl-[protein] + ADP + H(+). The catalysed reaction is L-threonyl-[protein] + ATP = O-phospho-L-threonyl-[protein] + ADP + H(+). In terms of biological role, MAP4K component of the MAPK pathway required for the mating pheromone response and the regulation of cell polarity and cell cycle. Phosphorylates histone H2B to form H2BS10ph. Is involved in conidiation, aerial hyphal growth and infection-related morphogenesis. The sequence is that of Serine/threonine-protein kinase MST20 (MST20) from Pyricularia oryzae (strain 70-15 / ATCC MYA-4617 / FGSC 8958) (Rice blast fungus).